Consider the following 363-residue polypeptide: Mitogen-activated protein kinase kinase 2 (363 aa).

Ser56 is modified (phosphoserine). Residues 70-330 form the Protein kinase domain; it reads LDMVKVIGKG…AKELMEHPFL (261 aa). ATP-binding positions include 76–84 and Lys99; that span reads IGKGSSGVV. Residue Asp192 is the Proton acceptor of the active site. Thr220, Thr226, and Thr230 each carry phosphothreonine.

The protein belongs to the protein kinase superfamily. STE Ser/Thr protein kinase family. MAP kinase kinase subfamily. As to quaternary structure, interacts with MEKK1, MPK4 and MPK6. May form a ternary complex composed of MEKK1 and MKK1/MKK2 and MPK4. Interacts with MPK10 and MPK11. Interacts with MAPKKK5 mainly in the cytosol. Phosphorylation at Thr-220 and Thr-226 by MAP kinase kinase kinases positively regulates kinase activity. Phosphorylated by MEKK1 in response to cold. Phosphorylated by MAPKKK5.

The catalysed reaction is L-seryl-[protein] + ATP = O-phospho-L-seryl-[protein] + ADP + H(+). It catalyses the reaction L-threonyl-[protein] + ATP = O-phospho-L-threonyl-[protein] + ADP + H(+). The enzyme catalyses L-tyrosyl-[protein] + ATP = O-phospho-L-tyrosyl-[protein] + ADP + H(+). Its activity is regulated as follows. Activated in response to cold and salt stresses through serine and threonine phosphorylation by MEKK1. In terms of biological role, MEKK1, MKK1/MKK2 and MPK4 function in a signaling pathway that modulates the expression of genes responding to biotic and abiotic stresses and also plays an important role in pathogen defense by negatively regulating innate immunity. Plays a role in abiotic stress tolerance and plant disease resistance through activation of MPK4 and MPK6 by phosphorylation. Acts redundantly with MKK1. The polypeptide is Mitogen-activated protein kinase kinase 2 (MKK2) (Arabidopsis thaliana (Mouse-ear cress)).